Here is a 341-residue protein sequence, read N- to C-terminus: Pyrophosphate--fructose 6-phosphate 1-phosphotransferase (341 aa).

Residue G10 coordinates diphosphate. E103 serves as a coordination point for Mg(2+). Residues 125–127 (TID), R162, 169–171 (MGR), E221, R265, and 271–274 (HVQR) each bind substrate. D127 (proton acceptor) is an active-site residue.

Belongs to the phosphofructokinase type A (PFKA) family. Mixed-substrate PFK group III subfamily. Homodimer or homotetramer. Requires Mg(2+) as cofactor.

The protein localises to the cytoplasm. It carries out the reaction beta-D-fructose 6-phosphate + diphosphate = beta-D-fructose 1,6-bisphosphate + phosphate + H(+). Its pathway is carbohydrate degradation; glycolysis; D-glyceraldehyde 3-phosphate and glycerone phosphate from D-glucose: step 3/4. With respect to regulation, non-allosteric. Catalyzes the phosphorylation of D-fructose 6-phosphate, the first committing step of glycolysis. Uses inorganic phosphate (PPi) as phosphoryl donor instead of ATP like common ATP-dependent phosphofructokinases (ATP-PFKs), which renders the reaction reversible, and can thus function both in glycolysis and gluconeogenesis. Consistently, PPi-PFK can replace the enzymes of both the forward (ATP-PFK) and reverse (fructose-bisphosphatase (FBPase)) reactions. The sequence is that of Pyrophosphate--fructose 6-phosphate 1-phosphotransferase from Amycolatopsis mediterranei (strain S699) (Nocardia mediterranei).